Here is a 313-residue protein sequence, read N- to C-terminus: MKLSYVTDSLGHLPFEDMLNFAAKLGIDTLEMTTGGWSPAPHLNLDELLQSSEKRKEFSQALEKRNMTLCALNCSGNPLDPGELGKSHRDITDKTMELAGLLGVKKVIMMSGLPAGGPDDKVPNWITYTVSWPPVLKDILNYQWEDVAIPYWKKLVKKAEACGVGKIALENFSSQLVYNPETLFRLRNAVGPMVGLNLDPSHLLWMGADPIIAARELGSAIHHVHGKDVRIERYLSAVNGLLETKEVTDPANRAWNYVAVGCGQDLQWWKEFFSVVKMMGYEGEVSLEMEDLTMSPEAGIRTSVEALKQTISQ.

This is an uncharacterized protein from Bacillus subtilis (strain 168).